Reading from the N-terminus, the 269-residue chain is 3-methyl-2-oxobutanoate hydroxymethyltransferase (269 aa).

Mg(2+) is bound by residues Asp-43 and Asp-82. 3-methyl-2-oxobutanoate is bound by residues 43-44, Asp-82, and Lys-110; that span reads DS. Residue Glu-112 coordinates Mg(2+). Catalysis depends on Glu-179, which acts as the Proton acceptor.

Belongs to the PanB family. As to quaternary structure, homodecamer; pentamer of dimers. Mg(2+) serves as cofactor.

The protein resides in the cytoplasm. It carries out the reaction 3-methyl-2-oxobutanoate + (6R)-5,10-methylene-5,6,7,8-tetrahydrofolate + H2O = 2-dehydropantoate + (6S)-5,6,7,8-tetrahydrofolate. It functions in the pathway cofactor biosynthesis; (R)-pantothenate biosynthesis; (R)-pantoate from 3-methyl-2-oxobutanoate: step 1/2. Its function is as follows. Catalyzes the reversible reaction in which hydroxymethyl group from 5,10-methylenetetrahydrofolate is transferred onto alpha-ketoisovalerate to form ketopantoate. The protein is 3-methyl-2-oxobutanoate hydroxymethyltransferase of Acinetobacter baylyi (strain ATCC 33305 / BD413 / ADP1).